We begin with the raw amino-acid sequence, 402 residues long: Tumor necrosis factor receptor superfamily member 11B (402 aa).

The N-terminal stretch at 1 to 21 is a signal peptide; the sequence is MNKLLCCALVFLDISIKWTTQ. TNFR-Cys repeat units lie at residues 24–62, 64–105, 106–142, and 144–185; these read FPPKYLHYDPESSRQLMCDKCPPGTFLKQPCTARRKTVC, PCPD…NRVC, ECEEGRYLELEFCLKHRSCPPGFGVLHPGTPERNTVC, and RCPD…DNIC. 8 disulfide bridges follow: cysteine 41-cysteine 54, cysteine 44-cysteine 62, cysteine 65-cysteine 80, cysteine 83-cysteine 97, cysteine 87-cysteine 105, cysteine 107-cysteine 118, cysteine 124-cysteine 142, and cysteine 145-cysteine 160. Residues asparagine 165 and asparagine 178 are each glycosylated (N-linked (GlcNAc...) asparagine). A disulfide bond links cysteine 166 and cysteine 185. 2 Death domains span residues 198-269 and 270-365; these read IDMT…DMVK and KIIQ…VIQS.

In terms of assembly, homodimer. Interacts with TNFSF10 and TNFSF11. Post-translationally, N-glycosylated. Contains sialic acid residues.

The protein resides in the secreted. Its function is as follows. Acts as a decoy receptor for TNFSF11/RANKL and thereby neutralizes its function in osteoclastogenesis. Inhibits the activation of osteoclasts and promotes osteoclast apoptosis. Bone homeostasis seems to depend on the local ratio between TNFSF11 and TNFRSF11B. May also play a role in preventing arterial calcification. May act as decoy receptor for TNFSF10/TRAIL and protect against apoptosis. TNFSF10/TRAIL binding blocks the inhibition of osteoclastogenesis. This is Tumor necrosis factor receptor superfamily member 11B (TNFRSF11B) from Bos taurus (Bovine).